The following is a 487-amino-acid chain: Recombining binding protein suppressor of hairless (487 aa).

2 DNA-binding regions span residues 44–54 (QKSYGNEKRFF) and 152–157 (SKPSKK). Lys162 is subject to N6-acetyllysine. The DNA-binding stretch occupies residues 179-184 (RLRSQT). One can recognise an IPT/TIG domain in the interval 342 to 432 (PVVESLQLNG…YSTSLTFTYT (91 aa)). The segment covering 452–468 (SSQVPPNESNTNSEGSY) has biased composition (polar residues). The segment at 452 to 487 (SSQVPPNESNTNSEGSYTNVSTNSTSVTSSTATVVS) is disordered. Low complexity predominate over residues 469–487 (TNVSTNSTSVTSSTATVVS).

It belongs to the Su(H) family. Interacts with activated NOTCH1, NOTCH2 or NOTCH3. Interacts with MINT/SHARP. This interaction may mediate the recruitment of large corepressor complexes containing proteins such as HDAC1, HDAC2, NCOR2, SAP30, FHL1/KYOT2 and CIR1. Interacts with EP300, MAML1 and PTF1A. Interacts with RITA1, leading to nuclear export, prevent the interaction between RBPJ and NICD product and subsequent down-regulation of the Notch signaling pathway. Interacts with SNW1. Interacts with CHCHD2 and CXXC5. Interacts with BEND6 (via BEN domain). Interacts with NKAPL. Interacts with ZMIZ1. Interacts with RBM15. Interacts with L3MBTL3 and KDM1A; the interaction with KDM1A is weaker in the absence of L3MBTL3 and the interaction with L3MBTL3 is impaired by Notch-derived peptides containing the intracellular domain (NICD).

The protein localises to the nucleus. It localises to the cytoplasm. In terms of biological role, transcriptional regulator that plays a central role in Notch signaling, a signaling pathway involved in cell-cell communication that regulates a broad spectrum of cell-fate determinations. Acts as a transcriptional repressor when it is not associated with Notch proteins. When associated with some NICD product of Notch proteins (Notch intracellular domain), it acts as a transcriptional activator that activates transcription of Notch target genes. Probably represses or activates transcription via the recruitment of chromatin remodeling complexes containing histone deacetylase or histone acetylase proteins, respectively. Specifically binds to the immunoglobulin kappa-type J segment recombination signal sequence. Binds specifically to methylated DNA. Binds to the oxygen responsive element of COX4I2 and activates its transcription under hypoxia conditions (4% oxygen). Negatively regulates the phagocyte oxidative burst in response to bacterial infection by repressing transcription of NADPH oxidase subunits. This chain is Recombining binding protein suppressor of hairless (RBPJ), found in Bos taurus (Bovine).